A 156-amino-acid polypeptide reads, in one-letter code: MKLAVLAVGHRQPDWVNEGCAEYLKRMPRELAASVTEIKPEARGSKTREQLLAAEKSRIRDAMAAGSRLVVLDEKGDDLTTLKLAKRLETWMQDGRDVALLIGGADGLDEEFKQQADDRLRLSSLTLPHGMARLLLCEQLYRAVSVLKNHPYHREG.

Residues L72, G103, and 122-127 (LSSLTL) each bind S-adenosyl-L-methionine.

This sequence belongs to the RNA methyltransferase RlmH family. As to quaternary structure, homodimer.

Its subcellular location is the cytoplasm. It carries out the reaction pseudouridine(1915) in 23S rRNA + S-adenosyl-L-methionine = N(3)-methylpseudouridine(1915) in 23S rRNA + S-adenosyl-L-homocysteine + H(+). Specifically methylates the pseudouridine at position 1915 (m3Psi1915) in 23S rRNA. The sequence is that of Ribosomal RNA large subunit methyltransferase H from Dechloromonas aromatica (strain RCB).